A 441-amino-acid polypeptide reads, in one-letter code: MIMAAEEVFWRNPKYHAFAQAIRTIPLRERDVKEAEERLRRFAPYIAKVFPETQPAHGIIESPLVRIPNMQRRLEKMFQTNIEGDLLLKCDSHLPISGSIKARGGIYEVLKHAEDLALANGMIAIGEDYAVMASEEFRQFFSRYSLVVGSTGNLGLSIGIIGAQLGFRVTVHMSADAKQWKKDLLRSKGVTVIEHLTDYNKVVEEARRQSAEDPTSYFIDDENSIHLFLGYAVAAFRLKKQLEDMNITVDETHPLFVYLPCGVGGGPGGVTFGLKLVYGDHVHCFFAEPTHSPCMLLGLMTGEHDRVSVQDFGLDNKTEADGLAVGRPSRLVGNMLENVISGVYTVDDSTLYRLLAAMVETEEIYLEPSALAGVAGPVRLFRDSAGQTYVEENDLKEKMKNAVHICWATGGSMVPKGVMEAYYREGMRIETMTGNCFSEGR.

Position 101 is an N6-(pyridoxal phosphate)lysine (K101).

Belongs to the serine/threonine dehydratase family. DsdA subfamily. The cofactor is pyridoxal 5'-phosphate.

It catalyses the reaction D-serine = pyruvate + NH4(+). The sequence is that of Probable D-serine dehydratase from Geobacillus kaustophilus (strain HTA426).